The chain runs to 989 residues: Cellulose synthase A catalytic subunit 4 [UDP-forming] (989 aa).

At 1–184 (MMESGVPPCA…SRIIPISKNK (184 aa)) the chain is on the cytoplasmic side. Zn(2+) is bound by residues cysteine 9, cysteine 12, cysteine 20, cysteine 23, cysteine 28, cysteine 31, cysteine 43, and cysteine 46. The RING-type; degenerate zinc-finger motif lies at 9–47 (CAACGDDAHAACRACSYALCKACLDEDAAEGRTTCARCG). Residues 138-149 (KKEKKASAKKAA) show a composition bias toward basic residues. The tract at residues 138–158 (KKEKKASAKKAAAKAQAPPVE) is disordered. Residues 185-205 (LTPYRAVIIMRLVVLGLFFHY) traverse the membrane as a helical segment. Topologically, residues 206–213 (RITNPVYS) are extracellular. The chain crosses the membrane as a helical span at residues 214 to 234 (AFGLWMTSVICEIWFGFSWIL). Residues 235–772 (DQFPKWCPIN…INTIVYPFTS (538 aa)) lie on the Cytoplasmic side of the membrane. UDP-alpha-D-glucose is bound by residues serine 272, lysine 278, glutamate 279, and aspartate 308. Aspartate 308 is an active-site residue. Positions 362-389 (VKERRAMKRDYEEYKVRINALVAKAQKT) form a coiled coil. Residue lysine 449 participates in UDP-alpha-D-glucose binding. Mn(2+) contacts are provided by lysine 450 and aspartate 474. The active site involves aspartate 688. Residues 773–793 (LPLIAYCCLPAICLLTGKFII) traverse the membrane as a helical segment. At 794-798 (PTLSN) the chain is on the extracellular side. The helical transmembrane segment at 799–819 (AATIWFLGLFISIIVTSVLEL) threads the bilayer. Residues 820 to 835 (RWSGIGIEDWWRNEQF) lie on the Cytoplasmic side of the membrane. The helical transmembrane segment at 836-856 (WVIGGVSAHLFAVFQGILKMI) threads the bilayer. Topologically, residues 857-884 (AGLDTNFTVTAKATDDTEFGELYVFKWT) are extracellular. Asparagine 862 is a glycosylation site (N-linked (GlcNAc...) asparagine). A helical membrane pass occupies residues 885 to 905 (TVLIPPTSILVLNLVGVVAGF). Residues 906 to 916 (SDALNSGYESW) are Cytoplasmic-facing. Residues 917-937 (GPLFGKVFFAMWVIMHLYPFL) traverse the membrane as a helical segment. Residues 938 to 946 (KGLMGRQNR) lie on the Extracellular side of the membrane. The chain crosses the membrane as a helical span at residues 947–967 (TPTIVVLWSVLLASVFSLLWV). Residues 968–989 (KIDPFIGSSETTTTNSCANFDC) are Cytoplasmic-facing.

This sequence belongs to the glycosyltransferase 2 family. Plant cellulose synthase subfamily. It depends on Mn(2+) as a cofactor. Requires Zn(2+) as cofactor.

Its subcellular location is the cell membrane. The catalysed reaction is [(1-&gt;4)-beta-D-glucosyl](n) + UDP-alpha-D-glucose = [(1-&gt;4)-beta-D-glucosyl](n+1) + UDP + H(+). The protein operates within glycan metabolism; plant cellulose biosynthesis. In terms of biological role, catalytic subunit of cellulose synthase terminal complexes ('rosettes'), required for beta-1,4-glucan microfibril crystallization, a major mechanism of the cell wall formation. Involved in the secondary cell wall formation. The polypeptide is Cellulose synthase A catalytic subunit 4 [UDP-forming] (CESA4) (Oryza sativa subsp. japonica (Rice)).